A 131-amino-acid polypeptide reads, in one-letter code: MANSRRVSKVSSLIKREVSLMLMQDIKDDRVGAGMVSITEVEVSGDLQHAKIFVSIYGSEEARAETMEGLRASQGFVRRTLGQRIRLRRSPEVLFIEDRSLEEGDRMIHLINQLEIKDPEELEAQESEEMV.

The protein belongs to the RbfA family. In terms of assembly, monomer. Binds 30S ribosomal subunits, but not 50S ribosomal subunits or 70S ribosomes.

The protein resides in the cytoplasm. One of several proteins that assist in the late maturation steps of the functional core of the 30S ribosomal subunit. Associates with free 30S ribosomal subunits (but not with 30S subunits that are part of 70S ribosomes or polysomes). Required for efficient processing of 16S rRNA. May interact with the 5'-terminal helix region of 16S rRNA. This Picosynechococcus sp. (strain ATCC 27264 / PCC 7002 / PR-6) (Agmenellum quadruplicatum) protein is Ribosome-binding factor A.